A 255-amino-acid chain; its full sequence is Protein DAL82 (255 aa).

The interval 87-149 is disordered; that stretch reads PEHPRPRTKF…SQPLPLDSIT (63 aa). Basic and acidic residues predominate over residues 128-138; the sequence is PNNHSSDDEHS.

Functionally, positive regulator of allophanate-induced genes in S.cerevisiae. In Saccharomyces cerevisiae (strain ATCC 204508 / S288c) (Baker's yeast), this protein is Protein DAL82 (DAL82).